We begin with the raw amino-acid sequence, 443 residues long: Packaging protein 1 (443 aa).

A disordered region spans residues 1 to 75 (MSGAADGTVP…PEAAQPPPSR (75 aa)). Basic and acidic residues predominate over residues 13–56 (EDTHQEDSGERECEQRPVHSGREATGESDPALERPDHGERHGPE). 169–176 (GPTGSGKS) provides a ligand contact to ATP. Residues 433–443 (VSYANKRKWYD) are DNA-binding.

The protein belongs to the adenoviridae packaging protein 1 family. As to quaternary structure, homodimer. Part of a genome packaging complex composed of packaging proteins 1, 2 and 3; this complex specifically binds to the packaging sequence on the left end of viral genomic DNA and performs packaging of the viral genome. Interacts with protein 33K.

It is found in the virion. The protein resides in the host nucleus. It localises to the host nucleoplasm. The protein localises to the host nucleolus. In terms of biological role, component of the packaging machinery which encapsidates the viral DNA into preformed capsids and transcriptional activator of the viral major late promoter (MLP). Binds, along with packaging proteins 2 and 3, to the specific packaging sequence on the left end of viral genomic DNA and displays ATPase activity thereby providing the power stroke of the packaging machinery. The activity of packaging protein IVa2 is stimulated by protein 33K which acts as a terminase. May be the protein that pumps DNA into the capsid powered by ATP hydrolysis. Specifically binds to the 5'-CG-3' nucleotides of the repeats making up the packaging sequence. Component of the DEF-A and DEF-B transcription factors that bind downstream elements of the major late promoter (MLP), and stimulate transcription from the MLP after initiation of viral DNA replication. DEF-A is a heterodimer packaging proteins 1 and 2 and DEF-B is a homodimer of packaging protein 1. The protein is Packaging protein 1 of Pantherophis guttatus (Corn snake).